The sequence spans 412 residues: NADH-quinone oxidoreductase subunit D (412 aa).

The protein belongs to the complex I 49 kDa subunit family. In terms of assembly, NDH-1 is composed of 14 different subunits. Subunits NuoB, C, D, E, F, and G constitute the peripheral sector of the complex.

The protein localises to the cell inner membrane. It carries out the reaction a quinone + NADH + 5 H(+)(in) = a quinol + NAD(+) + 4 H(+)(out). NDH-1 shuttles electrons from NADH, via FMN and iron-sulfur (Fe-S) centers, to quinones in the respiratory chain. The immediate electron acceptor for the enzyme in this species is believed to be a menaquinone. Couples the redox reaction to proton translocation (for every two electrons transferred, four hydrogen ions are translocated across the cytoplasmic membrane), and thus conserves the redox energy in a proton gradient. The sequence is that of NADH-quinone oxidoreductase subunit D from Flavobacterium psychrophilum (strain ATCC 49511 / DSM 21280 / CIP 103535 / JIP02/86).